A 591-amino-acid polypeptide reads, in one-letter code: Aspartate--tRNA ligase (591 aa).

Residue E173 participates in L-aspartate binding. The interval 197-200 (QLFK) is aspartate. R219 lines the L-aspartate pocket. Residues 219–221 (RDE) and Q228 contribute to the ATP site. H448 lines the L-aspartate pocket. E482 serves as a coordination point for ATP. R489 serves as a coordination point for L-aspartate. Residue 534-537 (GLDR) participates in ATP binding.

This sequence belongs to the class-II aminoacyl-tRNA synthetase family. Type 1 subfamily. Homodimer.

It localises to the cytoplasm. The catalysed reaction is tRNA(Asp) + L-aspartate + ATP = L-aspartyl-tRNA(Asp) + AMP + diphosphate. Catalyzes the attachment of L-aspartate to tRNA(Asp) in a two-step reaction: L-aspartate is first activated by ATP to form Asp-AMP and then transferred to the acceptor end of tRNA(Asp). The protein is Aspartate--tRNA ligase of Shewanella sp. (strain ANA-3).